The chain runs to 495 residues: Probable leucine aminopeptidase 2 (495 aa).

An N-terminal signal peptide occupies residues 1-21 (MKSQLLSLAVAVTTISQGVVG). The region spanning 130–216 (MAELVVAKNN…SQEDGKNLAT (87 aa)) is the PA domain. Residues asparagine 142 and asparagine 235 are each glycosylated (N-linked (GlcNAc...) asparagine). Residues histidine 259 and aspartate 271 each contribute to the Zn(2+) site. Asparagine 272 is a glycosylation site (N-linked (GlcNAc...) asparagine). Catalysis depends on glutamate 303, which acts as the Proton acceptor. 2 residues coordinate Zn(2+): glutamate 304 and aspartate 332. Asparagine 352 carries N-linked (GlcNAc...) asparagine glycosylation. Histidine 430 contributes to the Zn(2+) binding site.

Belongs to the peptidase M28 family. M28A subfamily. Monomer. The cofactor is Zn(2+).

Its subcellular location is the secreted. Extracellular aminopeptidase that releases a wide variety of amino acids from natural peptides and contributes to pathogenicity. In Arthroderma benhamiae (strain ATCC MYA-4681 / CBS 112371) (Trichophyton mentagrophytes), this protein is Probable leucine aminopeptidase 2 (LAP2).